Here is a 510-residue protein sequence, read N- to C-terminus: Leucine-rich repeat-containing protein 14B (510 aa).

One copy of the LRR 1; degenerate repeat lies at 100–137; that stretch reads SNRLRVADFTGIQDVQVQQCPCGRALGRWGRTKVLART. One copy of the LRR 2; degenerate repeat lies at 181–205; it reads QVCCPSLRADSLSPGQLLQVLGLAG. Residues 234 to 273 form an LRR 4; degenerate repeat; sequence FPQLTSLTLPTKAFDAPPTCAPDPEGEDLLLTSIAWELSQ. 5 LRR repeats span residues 274 to 298, 299 to 330, 331 to 349, 355 to 382, and 383 to 407; these read MNQL…LSPL, KTPL…AHLE, VLDL…TFFR, AQTL…GLSP, and CSQL…LFAA.

Belongs to the PRAME family. LRRC14 subfamily.

This is Leucine-rich repeat-containing protein 14B from Mus musculus (Mouse).